We begin with the raw amino-acid sequence, 467 residues long: ATP synthase subunit beta (467 aa).

156–163 contributes to the ATP binding site; it reads GGAGVGKT.

It belongs to the ATPase alpha/beta chains family. In terms of assembly, F-type ATPases have 2 components, CF(1) - the catalytic core - and CF(0) - the membrane proton channel. CF(1) has five subunits: alpha(3), beta(3), gamma(1), delta(1), epsilon(1). CF(0) has three main subunits: a(1), b(2) and c(9-12). The alpha and beta chains form an alternating ring which encloses part of the gamma chain. CF(1) is attached to CF(0) by a central stalk formed by the gamma and epsilon chains, while a peripheral stalk is formed by the delta and b chains.

The protein localises to the cell inner membrane. It carries out the reaction ATP + H2O + 4 H(+)(in) = ADP + phosphate + 5 H(+)(out). Produces ATP from ADP in the presence of a proton gradient across the membrane. The catalytic sites are hosted primarily by the beta subunits. In Cupriavidus necator (strain ATCC 17699 / DSM 428 / KCTC 22496 / NCIMB 10442 / H16 / Stanier 337) (Ralstonia eutropha), this protein is ATP synthase subunit beta.